The primary structure comprises 212 residues: Phosphatidylserine decarboxylase proenzyme (212 aa).

Serine 182 (schiff-base intermediate with substrate; via pyruvic acid) is an active-site residue. A Pyruvic acid (Ser); by autocatalysis modification is found at serine 182.

The protein belongs to the phosphatidylserine decarboxylase family. PSD-A subfamily. Heterodimer of a large membrane-associated beta subunit and a small pyruvoyl-containing alpha subunit. The cofactor is pyruvate. Post-translationally, is synthesized initially as an inactive proenzyme. Formation of the active enzyme involves a self-maturation process in which the active site pyruvoyl group is generated from an internal serine residue via an autocatalytic post-translational modification. Two non-identical subunits are generated from the proenzyme in this reaction, and the pyruvate is formed at the N-terminus of the alpha chain, which is derived from the carboxyl end of the proenzyme. The post-translation cleavage follows an unusual pathway, termed non-hydrolytic serinolysis, in which the side chain hydroxyl group of the serine supplies its oxygen atom to form the C-terminus of the beta chain, while the remainder of the serine residue undergoes an oxidative deamination to produce ammonia and the pyruvoyl prosthetic group on the alpha chain.

Its subcellular location is the cell membrane. The enzyme catalyses a 1,2-diacyl-sn-glycero-3-phospho-L-serine + H(+) = a 1,2-diacyl-sn-glycero-3-phosphoethanolamine + CO2. Its pathway is phospholipid metabolism; phosphatidylethanolamine biosynthesis; phosphatidylethanolamine from CDP-diacylglycerol: step 2/2. Functionally, catalyzes the formation of phosphatidylethanolamine (PtdEtn) from phosphatidylserine (PtdSer). The polypeptide is Phosphatidylserine decarboxylase proenzyme (Paraburkholderia phymatum (strain DSM 17167 / CIP 108236 / LMG 21445 / STM815) (Burkholderia phymatum)).